The primary structure comprises 127 residues: uncharacterized protein (127 aa).

This is an uncharacterized protein from Saccharomyces cerevisiae (strain ATCC 204508 / S288c) (Baker's yeast).